A 305-amino-acid polypeptide reads, in one-letter code: Glycine--tRNA ligase alpha subunit (305 aa).

It belongs to the class-II aminoacyl-tRNA synthetase family. In terms of assembly, tetramer of two alpha and two beta subunits.

It localises to the cytoplasm. The catalysed reaction is tRNA(Gly) + glycine + ATP = glycyl-tRNA(Gly) + AMP + diphosphate. In Streptococcus pyogenes serotype M4 (strain MGAS10750), this protein is Glycine--tRNA ligase alpha subunit.